The sequence spans 553 residues: Cytochrome P450 86A22 (553 aa).

The chain crosses the membrane as a helical span at residues 8–24; the sequence is MIVAIVAAYLLWFKSIT. Residue C459 participates in heme binding.

This sequence belongs to the cytochrome P450 family. It depends on heme as a cofactor. As to expression, mostly expressed in the developing stigma of floral buds. Weakly detected in leaves, stems and flowers.

The protein resides in the membrane. The catalysed reaction is (9Z)-octadecenoyl-CoA + reduced [NADPH--hemoprotein reductase] + O2 = (9Z)-18-hydroxyoctadecenoyl-CoA + oxidized [NADPH--hemoprotein reductase] + H2O + H(+). It catalyses the reaction (9Z,12Z)-octadecadienoyl-CoA + reduced [NADPH--hemoprotein reductase] + O2 = (9Z,12Z)-18-hydroxyoctadecadienoyl-CoA + oxidized [NADPH--hemoprotein reductase] + H2O + H(+). Functionally, fatty acyl-CoA omega-hydroxylase essential for the production of omega-hydroxy fatty acids and the biosynthesis of triacylglycerol-/diacylglycerol-based estolide polyesters in the stigma. Substrate preference is 16:0-CoA &gt; 18:1-CoA &gt; 18:0-CoA. The sequence is that of Cytochrome P450 86A22 from Petunia hybrida (Petunia).